The sequence spans 265 residues: Thiamine thiazole synthase (265 aa).

NAD(+) is bound by residues A43, 62–63, G70, V134, and 162–164; these read ER and HVD. Fe cation is bound by residues D164 and H179. M229 contacts NAD(+). Residue R239 participates in glycine binding.

It belongs to the THI4 family. Homooctamer; tetramer of dimers. Requires Fe(2+) as cofactor.

It catalyses the reaction hydrogen sulfide + glycine + NAD(+) = ADP-5-ethyl-4-methylthiazole-2-carboxylate + nicotinamide + 3 H2O + H(+). The protein operates within cofactor biosynthesis; thiamine diphosphate biosynthesis. Its function is as follows. Involved in the biosynthesis of the thiazole moiety of thiamine. Catalyzes the conversion of NAD and glycine to adenosine diphosphate 5-(2-hydroxyethyl)-4-methylthiazole-2-carboxylate (ADT), an adenylated thiazole intermediate, using free sulfide as a source of sulfur. This chain is Thiamine thiazole synthase, found in Sulfolobus acidocaldarius (strain ATCC 33909 / DSM 639 / JCM 8929 / NBRC 15157 / NCIMB 11770).